The following is a 340-amino-acid chain: Outer membrane protein B (340 aa).

The signal sequence occupies residues 1-26 (MSSKLVNSLRLTFLSFLGIVSTSLDA).

This sequence belongs to the chlamydial OMP family.

It localises to the cell outer membrane. In Chlamydia muridarum (strain MoPn / Nigg), this protein is Outer membrane protein B (ompB).